An 82-amino-acid polypeptide reads, in one-letter code: Putative antitoxin RelB1 (82 aa).

Functionally, antitoxin component of a type II toxin-antitoxin (TA) system. Its cognate toxin is RelE1 (Potential). This chain is Putative antitoxin RelB1 (relB1), found in Methanocaldococcus jannaschii (strain ATCC 43067 / DSM 2661 / JAL-1 / JCM 10045 / NBRC 100440) (Methanococcus jannaschii).